The primary structure comprises 198 residues: RNA-free ribonuclease P (198 aa).

It belongs to the HARP family.

The catalysed reaction is Endonucleolytic cleavage of RNA, removing 5'-extranucleotides from tRNA precursor.. Functionally, RNA-free RNase P that catalyzes the removal of the 5'-leader sequence from pre-tRNA to produce the mature 5'-terminus. This Nitrosococcus oceani (strain ATCC 19707 / BCRC 17464 / JCM 30415 / NCIMB 11848 / C-107) protein is RNA-free ribonuclease P.